Consider the following 159-residue polypeptide: Putative 2'-deoxynucleoside 5'-phosphate N-hydrolase 1 (159 aa).

Residues 25–31, tyrosine 40, histidine 58, glutamate 104, and 126–128 contribute to the substrate site; these read FLSGSIR and SAM.

Belongs to the 2'-deoxynucleoside 5'-phosphate N-hydrolase 1 family. In terms of assembly, monomer and homodimer.

It catalyses the reaction a pyrimidine 2'-deoxyribonucleoside 5'-phosphate + H2O = a pyrimidine nucleobase + 2-deoxy-D-ribose 5-phosphate. It carries out the reaction a purine 2'-deoxyribonucleoside 5'-phosphate + H2O = a purine nucleobase + 2-deoxy-D-ribose 5-phosphate. In terms of biological role, catalyzes the cleavage of the N-glycosidic bond of deoxyribonucleoside 5'-monophosphates to yield deoxyribose 5-phosphate and a purine or pyrimidine base. This is Putative 2'-deoxynucleoside 5'-phosphate N-hydrolase 1 from Methanosarcina barkeri (strain Fusaro / DSM 804).